The sequence spans 434 residues: Enolase (434 aa).

Gln-163 provides a ligand contact to (2R)-2-phosphoglycerate. Glu-205 (proton donor) is an active-site residue. Mg(2+) is bound by residues Asp-242, Glu-291, and Asp-318. (2R)-2-phosphoglycerate is bound by residues Lys-343, Arg-372, Ser-373, and Lys-394. Lys-343 acts as the Proton acceptor in catalysis.

Belongs to the enolase family. It depends on Mg(2+) as a cofactor.

The protein resides in the cytoplasm. It localises to the secreted. It is found in the cell surface. It carries out the reaction (2R)-2-phosphoglycerate = phosphoenolpyruvate + H2O. The protein operates within carbohydrate degradation; glycolysis; pyruvate from D-glyceraldehyde 3-phosphate: step 4/5. Catalyzes the reversible conversion of 2-phosphoglycerate (2-PG) into phosphoenolpyruvate (PEP). It is essential for the degradation of carbohydrates via glycolysis. This chain is Enolase, found in Streptococcus pneumoniae serotype 19F (strain G54).